We begin with the raw amino-acid sequence, 90 residues long: Small ribosomal subunit protein uS15 (90 aa).

It belongs to the universal ribosomal protein uS15 family. In terms of assembly, part of the 30S ribosomal subunit. Forms a bridge to the 50S subunit in the 70S ribosome, contacting the 23S rRNA.

Its function is as follows. One of the primary rRNA binding proteins, it binds directly to 16S rRNA where it helps nucleate assembly of the platform of the 30S subunit by binding and bridging several RNA helices of the 16S rRNA. Forms an intersubunit bridge (bridge B4) with the 23S rRNA of the 50S subunit in the ribosome. This is Small ribosomal subunit protein uS15 from Campylobacter fetus subsp. fetus (strain 82-40).